The primary structure comprises 497 residues: Probable cytosol aminopeptidase (497 aa).

Mn(2+)-binding residues include Lys268 and Asp273. Residue Lys280 is part of the active site. Mn(2+) is bound by residues Asp291, Asp350, and Glu352. Arg354 is a catalytic residue.

The protein belongs to the peptidase M17 family. It depends on Mn(2+) as a cofactor.

Its subcellular location is the cytoplasm. The catalysed reaction is Release of an N-terminal amino acid, Xaa-|-Yaa-, in which Xaa is preferably Leu, but may be other amino acids including Pro although not Arg or Lys, and Yaa may be Pro. Amino acid amides and methyl esters are also readily hydrolyzed, but rates on arylamides are exceedingly low.. It carries out the reaction Release of an N-terminal amino acid, preferentially leucine, but not glutamic or aspartic acids.. In terms of biological role, presumably involved in the processing and regular turnover of intracellular proteins. Catalyzes the removal of unsubstituted N-terminal amino acids from various peptides. In Alkalilimnicola ehrlichii (strain ATCC BAA-1101 / DSM 17681 / MLHE-1), this protein is Probable cytosol aminopeptidase.